Consider the following 168-residue polypeptide: G/U mismatch-specific DNA glycosylase (168 aa).

Belongs to the uracil-DNA glycosylase (UDG) superfamily. TDG/mug family. Binds DNA as a monomer.

The protein resides in the cytoplasm. The catalysed reaction is Specifically hydrolyzes mismatched double-stranded DNA and polynucleotides, releasing free uracil.. In terms of biological role, excises ethenocytosine and uracil, which can arise by alkylation or deamination of cytosine, respectively, from the corresponding mispairs with guanine in ds-DNA. It is capable of hydrolyzing the carbon-nitrogen bond between the sugar-phosphate backbone of the DNA and the mispaired base. The complementary strand guanine functions in substrate recognition. Required for DNA damage lesion repair in stationary-phase cells. The sequence is that of G/U mismatch-specific DNA glycosylase from Escherichia coli O9:H4 (strain HS).